A 449-amino-acid chain; its full sequence is Heterogeneous nuclear ribonucleoprotein H2 (449 aa).

An N-acetylmethionine modification is found at Met1. Met2 carries the post-translational modification N-acetylmethionine; in Heterogeneous nuclear ribonucleoprotein H2, N-terminally processed. The RRM 1 domain occupies 11 to 90; it reads FVVKVRGLPW…RYVEVFKSNS (80 aa). The residue at position 23 (Ser23) is a Phosphoserine. Lys35 is covalently cross-linked (Glycyl lysine isopeptide (Lys-Gly) (interchain with G-Cter in SUMO2)). 2 positions are modified to phosphoserine: Ser54 and Ser63. Residue Lys87 forms a Glycyl lysine isopeptide (Lys-Gly) (interchain with G-Cter in SUMO2) linkage. Ser90 carries the post-translational modification Phosphoserine. Residue Lys98 forms a Glycyl lysine isopeptide (Lys-Gly) (interchain with G-Cter in SUMO2) linkage. In terms of domain architecture, RRM 2 spans 111–188; sequence GFVRLRGLPF…RYIEIFKSSR (78 aa). Arg233 carries the post-translational modification Dimethylated arginine; alternate. Arg233 is modified (omega-N-methylarginine; alternate). Residues 234–249 form a 1-1 repeat; that stretch reads GAYGGGYGGYDDYGGY. Residues 234 to 433 are 2 X 16 AA Gly-rich approximate repeats; the sequence is GAYGGGYGGY…YGGQSSMSGY (200 aa). Tyr246 bears the Phosphotyrosine mark. An RRM 3 domain is found at 289-364; it reads HCVHMRGLPY…RYVELFLNST (76 aa). At Ser310 the chain carries Phosphoserine. 3 repeat units span residues 354-372, 374-392, and 418-433. The segment at 354–392 is 2 X 19 AA perfect repeats; the sequence is HRYVELFLNSTAGTSGGAYDHSYVELFLNSTAGASGGAY.

In terms of assembly, component of a ribonucleoprotein complex containing mRNAs and RNA-binding proteins including DDX5, HNRNPH2 and SRSF1 as well as splicing regulator ARVCF. Interacts with TXNL4/DIM1.

The protein resides in the nucleus. It is found in the nucleoplasm. Functionally, this protein is a component of the heterogeneous nuclear ribonucleoprotein (hnRNP) complexes which provide the substrate for the processing events that pre-mRNAs undergo before becoming functional, translatable mRNAs in the cytoplasm. Binds poly(RG). This chain is Heterogeneous nuclear ribonucleoprotein H2 (HNRNPH2), found in Bos taurus (Bovine).